The primary structure comprises 208 residues: N-(5'-phosphoribosyl)anthranilate isomerase (208 aa).

This sequence belongs to the TrpF family.

It carries out the reaction N-(5-phospho-beta-D-ribosyl)anthranilate = 1-(2-carboxyphenylamino)-1-deoxy-D-ribulose 5-phosphate. Its pathway is amino-acid biosynthesis; L-tryptophan biosynthesis; L-tryptophan from chorismate: step 3/5. The polypeptide is N-(5'-phosphoribosyl)anthranilate isomerase (Chlamydia trachomatis serovar L2 (strain ATCC VR-902B / DSM 19102 / 434/Bu)).